A 264-amino-acid polypeptide reads, in one-letter code: Proteasome subunit beta type-4 (264 aa).

The residue at position 1 (methionine 1) is an N-acetylmethionine. Residues 1 to 45 (MEAFLGSRSGLWAGGPAPGQFYRIPSTPDSFMDPASALYRGPITR) constitute a propeptide that is removed on maturation. Serine 26 carries the post-translational modification Phosphoserine. Tyrosine 102 bears the Phosphotyrosine mark.

This sequence belongs to the peptidase T1B family. In terms of assembly, the 26S proteasome consists of a 20S proteasome core and two 19S regulatory subunits. The 20S proteasome core is a barrel-shaped complex made of 28 subunits that are arranged in four stacked rings. The two outer rings are each formed by seven alpha subunits, and the two inner rings are formed by seven beta subunits. The proteolytic activity is exerted by three beta-subunits PSMB5, PSMB6 and PSMB7. Forms a ternary complex with SMAD1 and OAZ1 before PSMB4 is incorporated into the 20S proteasome. Interacts with PRPF19. (Microbial infection) Interacts with HTLV-1 Tax protein. As to quaternary structure, (Microbial infection) Interacts with HIV-1 Nef and Tat proteins.

It is found in the cytoplasm. It localises to the nucleus. Its function is as follows. Non-catalytic component of the 20S core proteasome complex involved in the proteolytic degradation of most intracellular proteins. This complex plays numerous essential roles within the cell by associating with different regulatory particles. Associated with two 19S regulatory particles, forms the 26S proteasome and thus participates in the ATP-dependent degradation of ubiquitinated proteins. The 26S proteasome plays a key role in the maintenance of protein homeostasis by removing misfolded or damaged proteins that could impair cellular functions, and by removing proteins whose functions are no longer required. Associated with the PA200 or PA28, the 20S proteasome mediates ubiquitin-independent protein degradation. This type of proteolysis is required in several pathways including spermatogenesis (20S-PA200 complex) or generation of a subset of MHC class I-presented antigenic peptides (20S-PA28 complex). SMAD1/OAZ1/PSMB4 complex mediates the degradation of the CREBBP/EP300 repressor SNIP1. The sequence is that of Proteasome subunit beta type-4 from Homo sapiens (Human).